The following is a 59-amino-acid chain: Single-pass membrane and coiled-coil domain-containing protein 4 (59 aa).

The interval 1-23 (MRQLKGKPKKETSKDKKERKQAM) is disordered. A compositionally biased stretch (basic and acidic residues) spans 9-22 (KKETSKDKKERKQA). Positions 9–31 (KKETSKDKKERKQAMQEARQQIT) form a coiled coil. A helical transmembrane segment spans residues 32–52 (TVVLPTLAVVVLLIVVFVYVA).

Belongs to the SMCO4 family.

The protein localises to the membrane. This Homo sapiens (Human) protein is Single-pass membrane and coiled-coil domain-containing protein 4 (SMCO4).